A 705-amino-acid polypeptide reads, in one-letter code: Lethal(3)malignant brain tumor-like protein 2 (705 aa).

Positions 1 to 84 (MEKPPSIEET…GTPRSLDGSG (84 aa)) are disordered. Serine 13 carries the post-translational modification Phosphoserine. Acidic residues predominate over residues 15-25 (PMEEEEDDDLE). Positions 38-49 (SSVGSESSSYLE) are enriched in low complexity. Acidic residues predominate over residues 50 to 60 (ESSEAENEDRE). Serine 67 carries the post-translational modification Phosphoserine. Threonine 76 carries the phosphothreonine modification. The segment at 81-116 (DGSGSEPAVCEMCGIVGTREAFFSKTKRFCSVSCSR) adopts an FCS-type zinc-finger fold. Zn(2+) contacts are provided by cysteine 90, cysteine 93, cysteine 110, and cysteine 114. MBT repeat units follow at residues 179–283 (FDWG…LVPP), 291–391 (TDWK…IKMS), 397–500 (MAHH…LTPP), and 508–604 (FNWE…LQPP). Phosphoserine is present on serine 338. A Glycyl lysine isopeptide (Lys-Gly) (interchain with G-Cter in SUMO2) cross-link involves residue lysine 405. The interval 608-705 (EPATPLKAKE…VENIKQETDD (98 aa)) is disordered. Residues 619 to 634 (TKKKKKQFGKKRKRIP) show a composition bias toward basic residues. Glycyl lysine isopeptide (Lys-Gly) (interchain with G-Cter in SUMO2) cross-links involve residues lysine 647, lysine 659, and lysine 675. Phosphoserine is present on residues serine 683, serine 688, and serine 689. Lysine 700 is covalently cross-linked (Glycyl lysine isopeptide (Lys-Gly) (interchain with G-Cter in SUMO1); alternate). Lysine 700 participates in a covalent cross-link: Glycyl lysine isopeptide (Lys-Gly) (interchain with G-Cter in SUMO2); alternate.

In terms of assembly, part of the E2F6.com-1 complex in G0 phase composed of E2F6, MGA, MAX, TFDP1, CBX3, BAT8, EUHMTASE1, RING1, RNF2, MBLR, BAT8 and YAF2.

It is found in the nucleus. Its function is as follows. Putative Polycomb group (PcG) protein. PcG proteins maintain the transcriptionally repressive state of genes, probably via a modification of chromatin, rendering it heritably changed in its expressibility. Its association with a chromatin-remodeling complex suggests that it may contribute to prevent expression of genes that trigger the cell into mitosis. Binds to monomethylated and dimethylated 'Lys-20' on histone H4. Binds histone H3 peptides that are monomethylated or dimethylated on 'Lys-4', 'Lys-9' or 'Lys-27'. The chain is Lethal(3)malignant brain tumor-like protein 2 (L3MBTL2) from Pongo abelii (Sumatran orangutan).